The following is a 94-amino-acid chain: Large ribosomal subunit protein uL23 (94 aa).

Belongs to the universal ribosomal protein uL23 family. In terms of assembly, part of the 50S ribosomal subunit. Contacts protein L29, and trigger factor when it is bound to the ribosome.

Its function is as follows. One of the early assembly proteins it binds 23S rRNA. One of the proteins that surrounds the polypeptide exit tunnel on the outside of the ribosome. Forms the main docking site for trigger factor binding to the ribosome. This chain is Large ribosomal subunit protein uL23, found in Symbiobacterium thermophilum (strain DSM 24528 / JCM 14929 / IAM 14863 / T).